A 191-amino-acid polypeptide reads, in one-letter code: Protein phosphatase inhibitor 2 (191 aa).

The segment covering 20–31 (ESNKPVRQKITE) has biased composition (basic and acidic residues). Disordered stretches follow at residues 20 to 52 (ESNKPVRQKITEPKTPYHPMMDDDGSLSPRGRA) and 67 to 191 (RNVL…PELI). Residues S45 and S47 each carry the phosphoserine modification. Positions 93–109 (SDEEEEEADPMDQDEEG) are enriched in acidic residues. Residues 114-136 (KNERFNAHRKAHYDEFRKVKELR) show a composition bias toward basic and acidic residues.

Interacts with protein phosphatase 1. Interacts with TOPP1, SRK2D/SNRK2.2, SRK2I/SNRK2.3, SRK2E/SNRK2.6, SRK2C/SNRK2.8 and PYL11. Post-translationally, phosphorylated in vivo. As to expression, expressed in roots, cotyledons, leaves, flowers and siliques.

The protein resides in the nucleus. It localises to the cytoplasm. In terms of biological role, inhibitor of protein-phosphatase 1 (PP1). Binds to and inhibits PP1 activity. Acts as negative regulator of abscisic acid (ABA) signaling. Enhances the inhibition of SRK2E/SNRK2.6 by TOPP1. May promote the interaction between TOPP1 and the ABA receptor PYL11. This is Protein phosphatase inhibitor 2 from Arabidopsis thaliana (Mouse-ear cress).